A 141-amino-acid polypeptide reads, in one-letter code: Organic hydroperoxide resistance protein-like 1 (141 aa).

The segment at 1–20 is disordered; the sequence is MAVNYETKATNTGGRNGHVQ.

It belongs to the OsmC/Ohr family.

The sequence is that of Organic hydroperoxide resistance protein-like 1 from Staphylococcus saprophyticus subsp. saprophyticus (strain ATCC 15305 / DSM 20229 / NCIMB 8711 / NCTC 7292 / S-41).